A 76-amino-acid polypeptide reads, in one-letter code: Acyl carrier protein (76 aa).

The region spanning 2-76 is the Carrier domain; the sequence is SSIFDKVKAI…SAVEYIKENQ (75 aa). Position 36 is an O-(pantetheine 4'-phosphoryl)serine (Ser-36).

This sequence belongs to the acyl carrier protein (ACP) family. In terms of processing, 4'-phosphopantetheine is transferred from CoA to a specific serine of apo-ACP by AcpS. This modification is essential for activity because fatty acids are bound in thioester linkage to the sulfhydryl of the prosthetic group.

The protein resides in the cytoplasm. It functions in the pathway lipid metabolism; fatty acid biosynthesis. Carrier of the growing fatty acid chain in fatty acid biosynthesis. The sequence is that of Acyl carrier protein from Heliobacterium modesticaldum (strain ATCC 51547 / Ice1).